The following is a 439-amino-acid chain: Phosphoribosylamine--glycine ligase (439 aa).

Positions 109–317 constitute an ATP-grasp domain; that stretch reads REFMERNKIP…LVEISERIID (209 aa). An ATP-binding site is contributed by 136–195; the sequence is IDEFGKPVVVKPLGLTGGKGVKVVGYQLKDNEEAKEYAEYLIRKDGKVLIEERTDGVEFT. 3 residues coordinate Mg(2+): Q275, E287, and N289. Residues Q275, E287, and N289 each coordinate Mn(2+).

Belongs to the GARS family. Mg(2+) serves as cofactor. Mn(2+) is required as a cofactor.

It carries out the reaction 5-phospho-beta-D-ribosylamine + glycine + ATP = N(1)-(5-phospho-beta-D-ribosyl)glycinamide + ADP + phosphate + H(+). It functions in the pathway purine metabolism; IMP biosynthesis via de novo pathway; N(1)-(5-phospho-D-ribosyl)glycinamide from 5-phospho-alpha-D-ribose 1-diphosphate: step 2/2. This Pyrococcus furiosus (strain ATCC 43587 / DSM 3638 / JCM 8422 / Vc1) protein is Phosphoribosylamine--glycine ligase.